A 381-amino-acid chain; its full sequence is Subtilisin J (381 aa).

The first 29 residues, Met1 to Ala29, serve as a signal peptide directing secretion. Residues Ala30–Tyr106 constitute a propeptide that is removed on maturation. The region spanning Lys38 to Ala103 is the Inhibitor I9 domain. Residue Gln108 coordinates Ca(2+). The 270-residue stretch at Pro111–Ala380 folds into the Peptidase S8 domain. Catalysis depends on Asp138, which acts as the Charge relay system. Asp147 lines the Ca(2+) pocket. His170 acts as the Charge relay system in catalysis. Leu181, Asn183, Ile185, Val187, Ala275, Tyr277, and Thr280 together coordinate Ca(2+). Ser327 serves as the catalytic Charge relay system.

It belongs to the peptidase S8 family. It depends on Ca(2+) as a cofactor.

It localises to the secreted. It catalyses the reaction Hydrolysis of proteins with broad specificity for peptide bonds, and a preference for a large uncharged residue in P1. Hydrolyzes peptide amides.. Subtilisin is an extracellular alkaline serine protease, it catalyzes the hydrolysis of proteins and peptide amides. In Geobacillus stearothermophilus (Bacillus stearothermophilus), this protein is Subtilisin J (aprJ).